The sequence spans 202 residues: dTTP/UTP pyrophosphatase (202 aa).

The active-site Proton acceptor is Asp76.

The protein belongs to the Maf family. YhdE subfamily. The cofactor is a divalent metal cation.

The protein localises to the cytoplasm. It carries out the reaction dTTP + H2O = dTMP + diphosphate + H(+). It catalyses the reaction UTP + H2O = UMP + diphosphate + H(+). Nucleoside triphosphate pyrophosphatase that hydrolyzes dTTP and UTP. May have a dual role in cell division arrest and in preventing the incorporation of modified nucleotides into cellular nucleic acids. The chain is dTTP/UTP pyrophosphatase from Neisseria meningitidis serogroup B (strain ATCC BAA-335 / MC58).